Reading from the N-terminus, the 785-residue chain is Protein translocase subunit SecA 3 (785 aa).

ATP is bound by residues Gln98, 116 to 120, and Asp505; that span reads GEGKT.

Belongs to the SecA family. As to quaternary structure, monomer and homodimer. Part of the essential Sec protein translocation apparatus which comprises SecA, SecYEG and auxiliary proteins SecDF. Other proteins may also be involved.

It localises to the cell membrane. The protein localises to the cytoplasm. It carries out the reaction ATP + H2O + cellular proteinSide 1 = ADP + phosphate + cellular proteinSide 2.. Its function is as follows. Part of the Sec protein translocase complex. Interacts with the SecYEG preprotein conducting channel. Has a central role in coupling the hydrolysis of ATP to the transfer of proteins into and across the cell membrane, serving as an ATP-driven molecular motor driving the stepwise translocation of polypeptide chains across the membrane. This Mycolicibacterium vanbaalenii (strain DSM 7251 / JCM 13017 / BCRC 16820 / KCTC 9966 / NRRL B-24157 / PYR-1) (Mycobacterium vanbaalenii) protein is Protein translocase subunit SecA 3.